A 295-amino-acid polypeptide reads, in one-letter code: MDQKQIEEIVRSVMASMGQAAPAPSEAKCATTTCAAPVTSESCALDLGSAEAKAWIGVENPHRADVLTELRRSTVARVCTGRAGPRPRTQALLRFLADHSRSKDTVLKEVPEEWVKAQGLLEVRSEISDKNLYLTRPDMGRRLCAEAVEALKAQCVANPDVQVVISDGLSTDAITVNYEEILPPLMAGLKQAGLKVGTPFFVRYGRVKIEDQIGELLGAKVVILLVGERPGLGQSESLSCYAVYSPCMATTVEADRTCISNIHQGGTPPVEAAAVIVDLAKRMLEQKASGINMTR.

The adenosylcob(III)alamin site is built by valine 207, glutamate 228, and cysteine 258.

Belongs to the EutC family. As to quaternary structure, the basic unit is a heterodimer which dimerizes to form tetramers. The heterotetramers trimerize; 6 large subunits form a core ring with 6 small subunits projecting outwards. It depends on adenosylcob(III)alamin as a cofactor.

The protein resides in the bacterial microcompartment. It carries out the reaction ethanolamine = acetaldehyde + NH4(+). The protein operates within amine and polyamine degradation; ethanolamine degradation. Its function is as follows. Catalyzes the deamination of various vicinal amino-alcohols to oxo compounds. Allows this organism to utilize ethanolamine as the sole source of nitrogen and carbon in the presence of external vitamin B12. The polypeptide is Ethanolamine ammonia-lyase small subunit (Escherichia fergusonii (strain ATCC 35469 / DSM 13698 / CCUG 18766 / IAM 14443 / JCM 21226 / LMG 7866 / NBRC 102419 / NCTC 12128 / CDC 0568-73)).